Here is a 379-residue protein sequence, read N- to C-terminus: MGDSRRRSLGNQPSSEAAGRSEREQDGDPRGLQSSVYESRRVTDPERQDLDNAELGPEDPEEELPPEEVAGEEFPETLDPKEALSELERVLDKDLEEDIPEISRLSISQKLPSTTMTKARKRRRRRRLMELAEPKINWQVLKDRKGRCGKGYAWISPCKMSLHFCLCWPSVYWTERFLEDTTLTITVPAVSRRVEELSRPKRFYLEYYNNNRTTPVWPIPRSSLEYRASSRLKELAAPKIRDNFWSMPMSEVSQVSRAAQMAVPSSRILQLSKPKAPATLLEEWDPVPKPKPHVSDHNRLLHLARPKAQSDKCVPDRDPRWEVLDVTKKVVASPRIISLAKPKVRKGLNEGYDRRPLASMSLPPPKASPEKCDQPRPGL.

Residues 1-82 (MGDSRRRSLG…EFPETLDPKE (82 aa)) form a disordered region. Composition is skewed to basic and acidic residues over residues 19–29 (GRSEREQDGDP) and 38–50 (ESRR…RQDL). Residues 56–76 (GPEDPEEELPPEEVAGEEFPE) are compositionally biased toward acidic residues. THEG repeat units follow at residues 118–137 (KARK…PKIN), 184–203 (TITV…PKRF), 222–241 (SSLE…PKIR), 258–277 (AAQM…PKAP), 290–309 (PKPH…PKAQ), and 326–345 (VTKK…PKVR). At serine 295 the chain carries Phosphoserine. Residues 344–379 (VRKGLNEGYDRRPLASMSLPPPKASPEKCDQPRPGL) form a disordered region. Composition is skewed to basic and acidic residues over residues 347-356 (GLNEGYDRRP) and 368-379 (SPEKCDQPRPGL).

In terms of assembly, interacts with CCT5. In terms of tissue distribution, testis specific.

It localises to the nucleus. Its function is as follows. May be involved (but not essential) in spermatogenesis. The polypeptide is Sperm microtubule associated protein 2 (Homo sapiens (Human)).